A 214-amino-acid polypeptide reads, in one-letter code: Adenylate kinase (214 aa).

10-15 (GAGKGT) is a binding site for ATP. Positions 30 to 59 (STGDMLRAAVKAGTPLGLEAKKVMDAGQLV) are NMP. Residues threonine 31, arginine 36, 57–59 (QLV), 85–88 (GFPR), and glutamine 92 contribute to the AMP site. The tract at residues 122–159 (GRRVHPGSGRVYHIVFNQPKVEGKDDVTGEDLAIRPDD) is LID. Residues arginine 123 and 132-133 (VY) contribute to the ATP site. 2 residues coordinate AMP: arginine 156 and arginine 167. An ATP-binding site is contributed by glutamine 200.

It belongs to the adenylate kinase family. As to quaternary structure, monomer.

Its subcellular location is the cytoplasm. It catalyses the reaction AMP + ATP = 2 ADP. It participates in purine metabolism; AMP biosynthesis via salvage pathway; AMP from ADP: step 1/1. Its function is as follows. Catalyzes the reversible transfer of the terminal phosphate group between ATP and AMP. Plays an important role in cellular energy homeostasis and in adenine nucleotide metabolism. This is Adenylate kinase from Shewanella piezotolerans (strain WP3 / JCM 13877).